Here is a 147-residue protein sequence, read N- to C-terminus: D-aminoacyl-tRNA deacylase (147 aa).

Residues 136 to 137 (GP) carry the Gly-cisPro motif, important for rejection of L-amino acids motif.

Belongs to the DTD family. In terms of assembly, homodimer.

The protein localises to the cytoplasm. It carries out the reaction glycyl-tRNA(Ala) + H2O = tRNA(Ala) + glycine + H(+). It catalyses the reaction a D-aminoacyl-tRNA + H2O = a tRNA + a D-alpha-amino acid + H(+). Its function is as follows. An aminoacyl-tRNA editing enzyme that deacylates mischarged D-aminoacyl-tRNAs. Also deacylates mischarged glycyl-tRNA(Ala), protecting cells against glycine mischarging by AlaRS. Acts via tRNA-based rather than protein-based catalysis; rejects L-amino acids rather than detecting D-amino acids in the active site. By recycling D-aminoacyl-tRNA to D-amino acids and free tRNA molecules, this enzyme counteracts the toxicity associated with the formation of D-aminoacyl-tRNA entities in vivo and helps enforce protein L-homochirality. The polypeptide is D-aminoacyl-tRNA deacylase (Streptococcus pneumoniae (strain P1031)).